A 421-amino-acid chain; its full sequence is Enolase (421 aa).

Residue Gln-165 coordinates (2R)-2-phosphoglycerate. Glu-207 serves as the catalytic Proton donor. Mg(2+)-binding residues include Asp-244, Glu-285, and Asp-312. (2R)-2-phosphoglycerate contacts are provided by Lys-337, Arg-366, Ser-367, and Lys-388. Catalysis depends on Lys-337, which acts as the Proton acceptor.

Belongs to the enolase family. Mg(2+) is required as a cofactor.

The protein resides in the cytoplasm. It localises to the secreted. It is found in the cell surface. It catalyses the reaction (2R)-2-phosphoglycerate = phosphoenolpyruvate + H2O. It participates in carbohydrate degradation; glycolysis; pyruvate from D-glyceraldehyde 3-phosphate: step 4/5. Its function is as follows. Catalyzes the reversible conversion of 2-phosphoglycerate (2-PG) into phosphoenolpyruvate (PEP). It is essential for the degradation of carbohydrates via glycolysis. The chain is Enolase from Ehrlichia ruminantium (strain Welgevonden).